Reading from the N-terminus, the 940-residue chain is Isoleucine--tRNA ligase (940 aa).

Residues 58–68 (PYANGDIHIGH) carry the 'HIGH' region motif. E564 contacts L-isoleucyl-5'-AMP. The 'KMSKS' region signature appears at 605–609 (KMSKS). K608 serves as a coordination point for ATP. Residues C903, C906, C923, and C926 each contribute to the Zn(2+) site.

Belongs to the class-I aminoacyl-tRNA synthetase family. IleS type 1 subfamily. As to quaternary structure, monomer. Requires Zn(2+) as cofactor.

It localises to the cytoplasm. It catalyses the reaction tRNA(Ile) + L-isoleucine + ATP = L-isoleucyl-tRNA(Ile) + AMP + diphosphate. Catalyzes the attachment of isoleucine to tRNA(Ile). As IleRS can inadvertently accommodate and process structurally similar amino acids such as valine, to avoid such errors it has two additional distinct tRNA(Ile)-dependent editing activities. One activity is designated as 'pretransfer' editing and involves the hydrolysis of activated Val-AMP. The other activity is designated 'posttransfer' editing and involves deacylation of mischarged Val-tRNA(Ile). This chain is Isoleucine--tRNA ligase, found in Shewanella halifaxensis (strain HAW-EB4).